A 453-amino-acid polypeptide reads, in one-letter code: Bifunctional protein GlmU (453 aa).

Residues 1–226 (MKFSAVILAA…AIEVEGVNDR (226 aa)) are pyrophosphorylase. Residues 8–11 (LAAG), Lys-22, Gln-73, 78–79 (GT), 100–102 (YGD), Gly-137, Glu-151, Asn-166, and Asn-224 contribute to the UDP-N-acetyl-alpha-D-glucosamine site. Residue Asp-102 participates in Mg(2+) binding. Asn-224 is a Mg(2+) binding site. A linker region spans residues 227-247 (AQLARLERAFQSMQAQKLLEQ). The segment at 248 to 453 (GVMLRDPARF…TGWQRPVKQK (206 aa)) is N-acetyltransferase. Positions 330 and 348 each coordinate UDP-N-acetyl-alpha-D-glucosamine. Residue His-360 is the Proton acceptor of the active site. Tyr-363 and Asn-374 together coordinate UDP-N-acetyl-alpha-D-glucosamine. Acetyl-CoA contacts are provided by residues Ala-377, 383–384 (NY), Ser-402, Ala-420, and Arg-437.

In the N-terminal section; belongs to the N-acetylglucosamine-1-phosphate uridyltransferase family. It in the C-terminal section; belongs to the transferase hexapeptide repeat family. In terms of assembly, homotrimer. Mg(2+) is required as a cofactor.

The protein localises to the cytoplasm. It catalyses the reaction alpha-D-glucosamine 1-phosphate + acetyl-CoA = N-acetyl-alpha-D-glucosamine 1-phosphate + CoA + H(+). The enzyme catalyses N-acetyl-alpha-D-glucosamine 1-phosphate + UTP + H(+) = UDP-N-acetyl-alpha-D-glucosamine + diphosphate. It functions in the pathway nucleotide-sugar biosynthesis; UDP-N-acetyl-alpha-D-glucosamine biosynthesis; N-acetyl-alpha-D-glucosamine 1-phosphate from alpha-D-glucosamine 6-phosphate (route II): step 2/2. The protein operates within nucleotide-sugar biosynthesis; UDP-N-acetyl-alpha-D-glucosamine biosynthesis; UDP-N-acetyl-alpha-D-glucosamine from N-acetyl-alpha-D-glucosamine 1-phosphate: step 1/1. It participates in bacterial outer membrane biogenesis; LPS lipid A biosynthesis. Catalyzes the last two sequential reactions in the de novo biosynthetic pathway for UDP-N-acetylglucosamine (UDP-GlcNAc). The C-terminal domain catalyzes the transfer of acetyl group from acetyl coenzyme A to glucosamine-1-phosphate (GlcN-1-P) to produce N-acetylglucosamine-1-phosphate (GlcNAc-1-P), which is converted into UDP-GlcNAc by the transfer of uridine 5-monophosphate (from uridine 5-triphosphate), a reaction catalyzed by the N-terminal domain. The chain is Bifunctional protein GlmU from Vibrio campbellii (strain ATCC BAA-1116).